Here is a 258-residue protein sequence, read N- to C-terminus: Replication protein A 28 kDa subunit (258 aa).

Over residues 1-24 (MLASQAGSNFSAAASSNGGQQQQQ) the composition is skewed to low complexity. The tract at residues 1 to 28 (MLASQAGSNFSAAASSNGGQQQQQRRQH) is disordered. Residues 60–138 (TVVGRVVGYE…SPIVTGTVVS (79 aa)) constitute a DNA-binding region (OB).

Belongs to the replication factor A protein 2 family. In terms of assembly, heterotrimer of 51, 28, and 14 kDa chains. In terms of processing, phosphorylated in a cell-cycle-dependent manner (from the S phase until mitosis). Phosphorylated upon DNA damage, which promotes its translocation to nuclear foci.

It localises to the nucleus. Its subcellular location is the PML body. Its function is as follows. As part of the heterotrimeric replication protein A complex (RPA/RP-A), binds and stabilizes single-stranded DNA intermediates, that form during DNA replication or upon DNA stress. It prevents their reannealing and in parallel, recruits and activates different proteins and complexes involved in DNA metabolism. Thereby, it plays an essential role both in DNA replication and the cellular response to DNA damage. The chain is Replication protein A 28 kDa subunit (RPA2) from Crithidia fasciculata.